Consider the following 534-residue polypeptide: Ankyrin repeat domain-containing protein 34C (534 aa).

4 ANK repeats span residues 10-39 (TDGN…YINE), 43-80 (KGET…DPNI), 84-114 (SGKT…DPSL), and 118-147 (TGAS…AKGK). A disordered region spans residues 159-205 (SGTKTTKQYLNVPPSPKVEDRQSPPLCTTPSDVELKTSGLASPPSEK). Ser-301 is modified (phosphoserine). 2 disordered regions span residues 332 to 368 (YEKG…LKDP) and 384 to 403 (QPVG…GPLD). The residue at position 446 (Ser-446) is a Phosphoserine. The segment at 480–503 (SKPASPLASGLKSMAPVAPNSPKR) is disordered.

Belongs to the ANKRD34 family.

The protein is Ankyrin repeat domain-containing protein 34C (Ankrd34c) of Mus musculus (Mouse).